A 367-amino-acid chain; its full sequence is MTDKEKKPCAIIVVGMAGSGKTTFMQQLNAHLHSKNKPPYILNLDPAVRNLPYEANIDIRDTINYKEVMKQYNLGPNGGIMTSLNLFVTKFDQVLKILEKRAPTVDHILIDTPGQIEIFQWSASGSIICDTLASSWPTCIAYVVDTPRATSTSTWMSSMLYACSMLYKAKLPLIIVYNKCDVQDSEFAKKWMTDFEEFQQAVTKDEGMSSEGATSGYMGSLVNSMSLMLEEFYRHLDFVSCSSVTGEGMDDFLEAVKAKVKEYEEEYVPEMERMKEIQRQTKERQKEAQLSKLMKDMHVSKDKEDVGLTVSDAEDEYNGELVDPDEDDGLTAEDREDMIKQYRVALGISDDISDEKLLEMLTERMKQ.

Residues 15–22 (GMAGSGKT) and 18–23 (GSGKTT) contribute to the GTP site. Positions 75 to 77 (GPN) match the Gly-Pro-Asn (GPN)-loop; involved in dimer interface motif. Residue 178–181 (NKCD) coordinates GTP. Positions 247–290 (EGMDDFLEAVKAKVKEYEEEYVPEMERMKEIQRQTKERQKEAQL) form a coiled coil. The disordered stretch occupies residues 306–332 (VGLTVSDAEDEYNGELVDPDEDDGLTA). Serine 311 is subject to Phosphoserine. The span at 312-332 (DAEDEYNGELVDPDEDDGLTA) shows a compositional bias: acidic residues.

The protein belongs to the GPN-loop GTPase family. As to quaternary structure, heterodimers with gpn2 or fet5/gpn3. Binds to RNA polymerase II (RNAPII).

It localises to the cytoplasm. Its function is as follows. Small GTPase required for proper nuclear import of RNA polymerase II (RNAPII). May act at an RNAP assembly step prior to nuclear import. The protein is GPN-loop GTPase 1 of Schizosaccharomyces pombe (strain 972 / ATCC 24843) (Fission yeast).